A 614-amino-acid chain; its full sequence is Acid phosphatase (614 aa).

The N-terminal stretch at 1-22 (MKGTAASALLVALSATAAQARP) is a signal peptide. In terms of domain architecture, Fibronectin type-III spans 80 to 176 (IPKGMHIHYQ…EVLSFKTSRP (97 aa)). Asparagine 110, asparagine 161, asparagine 242, asparagine 295, asparagine 333, asparagine 340, asparagine 352, asparagine 408, asparagine 429, asparagine 512, asparagine 523, asparagine 559, and asparagine 578 each carry an N-linked (GlcNAc...) asparagine glycan. Positions 606 to 614 (VAGGKKLHS) are excised as a propeptide.

Monomer. Requires Cu cation as cofactor. In terms of processing, glycosylated; probably with N-linked high-mannose oligosaccharides.

Its subcellular location is the secreted. The enzyme catalyses a phosphate monoester + H2O = an alcohol + phosphate. Its activity is regulated as follows. Competitively inhibited by phosphomycin and inorganic orthophosphate. The chain is Acid phosphatase (aphA) from Aspergillus ficuum.